The primary structure comprises 359 residues: Small ribosomal subunit biogenesis GTPase RsgA (359 aa).

The CP-type G domain occupies 101–259 (KRKGSQAIAS…LMDNPGIREV (159 aa)). GTP is bound by residues 149-152 (NKKD) and 201-209 (GSSGAGKST). Zn(2+)-binding residues include C284, C289, H291, and C297. A disordered region spans residues 331–359 (DPEEARKKKQKDKQMSKALQKRLKDKGRK). The segment covering 349-359 (LQKRLKDKGRK) has biased composition (basic residues).

The protein belongs to the TRAFAC class YlqF/YawG GTPase family. RsgA subfamily. As to quaternary structure, monomer. Associates with 30S ribosomal subunit, binds 16S rRNA. It depends on Zn(2+) as a cofactor.

Its subcellular location is the cytoplasm. Its function is as follows. One of several proteins that assist in the late maturation steps of the functional core of the 30S ribosomal subunit. Helps release RbfA from mature subunits. May play a role in the assembly of ribosomal proteins into the subunit. Circularly permuted GTPase that catalyzes slow GTP hydrolysis, GTPase activity is stimulated by the 30S ribosomal subunit. The protein is Small ribosomal subunit biogenesis GTPase RsgA of Leptospira interrogans serogroup Icterohaemorrhagiae serovar Lai (strain 56601).